A 695-amino-acid chain; its full sequence is Scarecrow-like protein 31 (695 aa).

Disordered stretches follow at residues 105 to 136 (VISD…NSSN) and 234 to 260 (ISKT…RSKQ). Over residues 113–136 (SSIPNNSITTSSSSNSGDYSNSSN) the composition is skewed to low complexity. A coiled-coil region spans residues 233-266 (AISKTRKNHHEREEEEDDLEEARRRSKQFAVNEE). Residues 306-693 (AKKKSRAVDF…RILFSSSCWV (388 aa)) form the GRAS domain. The segment at 313–377 (VDFRTLLTLC…EGSTGTMIQS (65 aa)) is leucine repeat I (LRI). A VHIID region spans residues 396–461 (YSVFLSASPF…PGLRKLRITG (66 aa)). A VHIID motif is present at residues 427 to 431 (LHIVD). Residues 477–509 (DTGRRLTEYCKRFGVPFEYNAIASKNWETIKME) are leucine repeat II (LRII). Positions 519-614 (LAVNAVLRFK…GEFYGREVMN (96 aa)) are PFYRE. The tract at residues 617–693 (ACEGVDRVER…RILFSSSCWV (77 aa)) is SAW.

Belongs to the GRAS family. Expressed in seedlings, roots, cotyledons, leaves and sepals.

Its subcellular location is the nucleus. In terms of biological role, probable transcription factor involved in plant development. The polypeptide is Scarecrow-like protein 31 (SCL31) (Arabidopsis thaliana (Mouse-ear cress)).